The following is a 202-amino-acid chain: Transcription factor MUTE (202 aa).

The 49-residue stretch at 1–49 (MSHIAVERNRRRQMNEHLKSLRSLTPCFYIKRGDQASIIGGVIEFIKEL) folds into the bHLH domain.

Homodimer. Leaf epidermis and flowers.

It localises to the nucleus. Functionally, transcription factor. Together with FMA and SPCH, regulates the stomata formation. Required for the differentiation of stomatal guard cells, by promoting successive asymmetric cell divisions and the formation of guard mother cells. Promotes the conversion of the leaf epidermis into stomata. This chain is Transcription factor MUTE (MUTE), found in Arabidopsis thaliana (Mouse-ear cress).